Reading from the N-terminus, the 314-residue chain is MKKKIAEYEVGEQVDIFLLIKTATKGIASNGKPFLTVILQDPSGDIEAKLWDVSPEVEKQYVAETIVKVAGDILNYKGRIQLRVKQIRVANENEVTDISDFVEKAPVKKEDMVEKITQYIFEMRNPNIQRLTRHLLNKHQTEFLDYPAATKNHHEFVSGLAYHVVSMLDLAKAISNLYPSLDKDLLYAGVILHDLGKVIELSGPISTTYTLEGNLLGHISIMVNEIGKAADELQIDAEEVLILQHIVLSHHGKAEWGSPKPPLVKEAEILHYIDNLDAKMNMMDRALGRTKPGEYTERVFALDNRSFYKPSFHN.

The 117-residue stretch at 163–279 (HVVSMLDLAK…LHYIDNLDAK (117 aa)) folds into the HD domain.

The protein belongs to the YhaM family.

In terms of biological role, shows a 3'-5' exoribonuclease activity. The chain is 3'-5' exoribonuclease YhaM from Bacillus cereus (strain AH187).